We begin with the raw amino-acid sequence, 402 residues long: Flavohemoprotein (402 aa).

A Globin domain is found at 1-138 (MLSPEVRALV…LADLLIGRER (138 aa)). Histidine 85 is a binding site for heme b. Catalysis depends on charge relay system residues tyrosine 95 and glutamate 137. The tract at residues 149 to 402 (GGWTGWRAFK…AEVFGTGGVA (254 aa)) is reductase. The FAD-binding FR-type domain occupies 152-261 (TGWRAFKVVR…SPPQGDFTLD (110 aa)). Residues tyrosine 190 and 206-209 (RQYS) each bind FAD. Residue 274–279 (GVGLTP) participates in NADP(+) binding. Position 395–398 (395–398 (VFGT)) interacts with FAD.

This sequence belongs to the globin family. Two-domain flavohemoproteins subfamily. In the C-terminal section; belongs to the flavoprotein pyridine nucleotide cytochrome reductase family. Heme b is required as a cofactor. The cofactor is FAD.

It catalyses the reaction 2 nitric oxide + NADPH + 2 O2 = 2 nitrate + NADP(+) + H(+). The enzyme catalyses 2 nitric oxide + NADH + 2 O2 = 2 nitrate + NAD(+) + H(+). In terms of biological role, is involved in NO detoxification in an aerobic process, termed nitric oxide dioxygenase (NOD) reaction that utilizes O(2) and NAD(P)H to convert NO to nitrate, which protects the bacterium from various noxious nitrogen compounds. Therefore, plays a central role in the inducible response to nitrosative stress. The protein is Flavohemoprotein of Bordetella pertussis (strain Tohama I / ATCC BAA-589 / NCTC 13251).